We begin with the raw amino-acid sequence, 87 residues long: MSEQTGKVDDSQSPPKVQKKLRKGDLVKVDREKYSNSLESKASDTNLPEYIFQGPGEVLLIKGDYCQVRWRRPVPDVWMNSDHIVSY.

The segment covering 1 to 10 (MSEQTGKVDD) has biased composition (basic and acidic residues). Residues 1–26 (MSEQTGKVDDSQSPPKVQKKLRKGDL) are disordered.

Belongs to the complex I NdhO subunit family. NDH-1 can be composed of about 15 different subunits; different subcomplexes with different compositions have been identified which probably have different functions.

The protein resides in the cellular thylakoid membrane. It catalyses the reaction a plastoquinone + NADH + (n+1) H(+)(in) = a plastoquinol + NAD(+) + n H(+)(out). The catalysed reaction is a plastoquinone + NADPH + (n+1) H(+)(in) = a plastoquinol + NADP(+) + n H(+)(out). In terms of biological role, NDH-1 shuttles electrons from an unknown electron donor, via FMN and iron-sulfur (Fe-S) centers, to quinones in the respiratory and/or the photosynthetic chain. The immediate electron acceptor for the enzyme in this species is believed to be plastoquinone. Couples the redox reaction to proton translocation, and thus conserves the redox energy in a proton gradient. Cyanobacterial NDH-1 also plays a role in inorganic carbon-concentration. This is NAD(P)H-quinone oxidoreductase subunit O from Prochlorococcus marinus (strain NATL1A).